Consider the following 99-residue polypeptide: Cytochrome c oxidase subunit 4 isoform 1, mitochondrial (99 aa).

Residues 1–73 (SVVKREDFSL…TFAEMNRGSN (73 aa)) lie on the Mitochondrial matrix side of the membrane. N6-acetyllysine; alternate is present on lysine 4. The residue at position 4 (lysine 4) is an N6-succinyllysine; alternate. Lysine 28 is subject to N6-acetyllysine. Phosphoserine occurs at positions 31 and 33. At lysine 35 the chain carries N6-acetyllysine; alternate. The residue at position 35 (lysine 35) is an N6-succinyllysine; alternate. The residue at position 42 (lysine 42) is an N6-acetyllysine. A helical membrane pass occupies residues 74 to 99 (EWKTVVGTATFFIGFTALIIMWQKRY).

It belongs to the cytochrome c oxidase IV family. In terms of assembly, component of the cytochrome c oxidase (complex IV, CIV), a multisubunit enzyme composed of 14 subunits. The complex is composed of a catalytic core of 3 subunits MT-CO1, MT-CO2 and MT-CO3, encoded in the mitochondrial DNA, and 11 supernumerary subunits COX4I, COX5A, COX5B, COX6A, COX6B, COX6C, COX7A, COX7B, COX7C, COX8 and NDUFA4, which are encoded in the nuclear genome. The complex exists as a monomer or a dimer and forms supercomplexes (SCs) in the inner mitochondrial membrane with NADH-ubiquinone oxidoreductase (complex I, CI) and ubiquinol-cytochrome c oxidoreductase (cytochrome b-c1 complex, complex III, CIII), resulting in different assemblies (supercomplex SCI(1)III(2)IV(1) and megacomplex MCI(2)III(2)IV(2)). Interacts with PHB2; the interaction decreases in absence of SPHK2. Interacts with AFG1L. Interacts with ABCB7; this interaction allows the regulation of cellular iron homeostasis and cellular reactive oxygen species (ROS) levels in cardiomyocytes. Interacts with FLVCR2; this interaction occurs in the absence of heme and is disrupted upon heme binding. Interacts with IRGC.

Its subcellular location is the mitochondrion inner membrane. It participates in energy metabolism; oxidative phosphorylation. Functionally, component of the cytochrome c oxidase, the last enzyme in the mitochondrial electron transport chain which drives oxidative phosphorylation. The respiratory chain contains 3 multisubunit complexes succinate dehydrogenase (complex II, CII), ubiquinol-cytochrome c oxidoreductase (cytochrome b-c1 complex, complex III, CIII) and cytochrome c oxidase (complex IV, CIV), that cooperate to transfer electrons derived from NADH and succinate to molecular oxygen, creating an electrochemical gradient over the inner membrane that drives transmembrane transport and the ATP synthase. Cytochrome c oxidase is the component of the respiratory chain that catalyzes the reduction of oxygen to water. Electrons originating from reduced cytochrome c in the intermembrane space (IMS) are transferred via the dinuclear copper A center (CU(A)) of subunit 2 and heme A of subunit 1 to the active site in subunit 1, a binuclear center (BNC) formed by heme A3 and copper B (CU(B)). The BNC reduces molecular oxygen to 2 water molecules using 4 electrons from cytochrome c in the IMS and 4 protons from the mitochondrial matrix. In Trachypithecus cristatus (Silvered leaf-monkey), this protein is Cytochrome c oxidase subunit 4 isoform 1, mitochondrial (COX4I1).